A 586-amino-acid chain; its full sequence is Putative ABC transporter ATP-binding protein MG187 homolog (586 aa).

Residues 13–464 (IEFKNIVVDF…PANEFVATFL (452 aa)) enclose the ABC transporter domain. 45 to 52 (GPSGCGKT) is an ATP binding site.

It belongs to the ABC transporter superfamily.

The polypeptide is Putative ABC transporter ATP-binding protein MG187 homolog (Mycoplasma pneumoniae (strain ATCC 29342 / M129 / Subtype 1) (Mycoplasmoides pneumoniae)).